Here is a 655-residue protein sequence, read N- to C-terminus: WD repeat-containing protein 70 (655 aa).

2 disordered regions span residues 1-24 (MEHSGPSEVTGADTAGPDPQLAVT) and 43-170 (FEQT…PIHR). A compositionally biased stretch (basic and acidic residues) spans 45–78 (QTRRTAVERSRKTLEAREKEEEMNREKELRKQLE). A compositionally biased stretch (low complexity) spans 99-112 (RDTSSSDSDHSSGS). Acidic residues predominate over residues 148-165 (EEGEDDDDDDLEDEGEED). 7 WD repeats span residues 181–220 (HGTKTVSALGLDPSGARLVTGGYDYDVKFWDFAGMDASFK), 228–269 (CECH…ECIK), 282–322 (GHTA…KQKS), 331–370 (GKKVIPTTCTYSRDGNLVAAACQNGSIQIWDRNLTVHPKF), 377–416 (APGTDTSCVAFSYDGNVLASRGGDDTLKLWDVRQFNKPLF), 422–467 (PTLF…RVYE), and 470–509 (ITDASVVRCLWHPKLNQIMVGTGNGLAKVYYDPNKSQRGA). A Glycyl lysine isopeptide (Lys-Gly) (interchain with G-Cter in SUMO2) cross-link involves residue Lys297. At Lys453 the chain carries N6-acetyllysine. A compositionally biased stretch (basic and acidic residues) spans 541–566 (REPRQRSTRKQLEKDRLDPLKSHKPE). The interval 541 to 582 (REPRQRSTRKQLEKDRLDPLKSHKPEPPVAGPGRGGRVGTHG) is disordered. Residues 572 to 582 (PGRGGRVGTHG) show a composition bias toward gly residues. Phosphothreonine is present on Thr580. Glycyl lysine isopeptide (Lys-Gly) (interchain with G-Cter in SUMO2) cross-links involve residues Lys591 and Lys597. A phosphoserine mark is found at Ser622 and Ser639. The interval 632-655 (TMFAQVESDDEESKNEPEWKKRKI) is disordered. Basic and acidic residues predominate over residues 645–655 (KNEPEWKKRKI).

This sequence belongs to the WD repeat GAD-1 family.

The sequence is that of WD repeat-containing protein 70 (Wdr70) from Rattus norvegicus (Rat).